The following is a 508-amino-acid chain: MAP kinase kinase MKK1/SSP32 (508 aa).

Disordered regions lie at residues 1–21 (MASL…PRLK), 35–95 (IYLT…LSIN), and 130–158 (ELSG…YLRN). The segment covering 35-47 (IYLTSNGSSTTAY) has biased composition (polar residues). Low complexity predominate over residues 48–66 (SSHTPEPLTSSTSTLFSQT). 2 stretches are compositionally biased toward polar residues: residues 67 to 79 (RLHP…TLNT) and 131 to 158 (LSGN…YLRN). At serine 192 the chain carries Phosphoserine. The Protein kinase domain maps to 221–488 (IETLGILGEG…PRQMINHPWI (268 aa)). ATP-binding positions include 227 to 235 (LGEGAGGSV) and lysine 250. Catalysis depends on aspartate 349, which acts as the Proton acceptor.

This sequence belongs to the protein kinase superfamily. STE Ser/Thr protein kinase family. MAP kinase kinase subfamily.

The catalysed reaction is L-seryl-[protein] + ATP = O-phospho-L-seryl-[protein] + ADP + H(+). It carries out the reaction L-threonyl-[protein] + ATP = O-phospho-L-threonyl-[protein] + ADP + H(+). The enzyme catalyses L-tyrosyl-[protein] + ATP = O-phospho-L-tyrosyl-[protein] + ADP + H(+). Its function is as follows. Involved in a signal transduction pathway that play a role in yeast cell morphogenesis and cell growth. This pathway seems to start by SMP3; then involve the kinase PKC1 that may act on the BCK1 kinase that then phosphorylates MKK1 and MKK2 which themselves phosphorylate the MPK1 kinase. This Saccharomyces cerevisiae (strain ATCC 204508 / S288c) (Baker's yeast) protein is MAP kinase kinase MKK1/SSP32 (MKK1).